A 234-amino-acid polypeptide reads, in one-letter code: 2-C-methyl-D-erythritol 4-phosphate cytidylyltransferase (234 aa).

It belongs to the IspD/TarI cytidylyltransferase family. IspD subfamily.

It catalyses the reaction 2-C-methyl-D-erythritol 4-phosphate + CTP + H(+) = 4-CDP-2-C-methyl-D-erythritol + diphosphate. The protein operates within isoprenoid biosynthesis; isopentenyl diphosphate biosynthesis via DXP pathway; isopentenyl diphosphate from 1-deoxy-D-xylulose 5-phosphate: step 2/6. Its function is as follows. Catalyzes the formation of 4-diphosphocytidyl-2-C-methyl-D-erythritol from CTP and 2-C-methyl-D-erythritol 4-phosphate (MEP). The sequence is that of 2-C-methyl-D-erythritol 4-phosphate cytidylyltransferase from Thermosynechococcus vestitus (strain NIES-2133 / IAM M-273 / BP-1).